The primary structure comprises 417 residues: Tyrosine--tRNA ligase (417 aa).

Y35 lines the L-tyrosine pocket. The short motif at 40–49 is the 'HIGH' region element; the sequence is ATAGSLTVGH. Residues Y165 and Q169 each contribute to the L-tyrosine site. The short motif at 229–233 is the 'KMSKS' region element; that stretch reads KFGKS. K232 provides a ligand contact to ATP. One can recognise an S4 RNA-binding domain in the interval 350–416; it reads ISLLEALVFT…GKRFNALIIF (67 aa).

The protein belongs to the class-I aminoacyl-tRNA synthetase family. TyrS type 1 subfamily. As to quaternary structure, homodimer.

Its subcellular location is the cytoplasm. The enzyme catalyses tRNA(Tyr) + L-tyrosine + ATP = L-tyrosyl-tRNA(Tyr) + AMP + diphosphate + H(+). Its function is as follows. Catalyzes the attachment of tyrosine to tRNA(Tyr) in a two-step reaction: tyrosine is first activated by ATP to form Tyr-AMP and then transferred to the acceptor end of tRNA(Tyr). The protein is Tyrosine--tRNA ligase of Phytoplasma mali (strain AT).